The chain runs to 183 residues: Protein SHI RELATED SEQUENCE 6 (183 aa).

Cys41, Cys44, Cys52, Cys57, Cys61, and Cys68 together coordinate Zn(2+). The segment at residues 41-68 (CRDCGNRAKKECLFERCRTCCKSRGYNC) is a DNA-binding region (zn(2)-C6 fungal-type; degenerate). Over residues 79-88 (SSATRSSSSP) the composition is skewed to low complexity. The disordered stretch occupies residues 79-121 (SSATRSSSSPSERKKKLKIDKQSSPNVSLLPTTTSRQERGFRE). The span at 100–113 (QSSPNVSLLPTTTS) shows a compositional bias: polar residues. A Required for homo- and heterodimerization motif is present at residues 157 to 160 (ISGH).

This sequence belongs to the SHI protein family.

Its subcellular location is the nucleus. Its function is as follows. Transcription activator that binds DNA on 5'-ACTCTAC-3' and promotes auxin homeostasis-regulating gene expression (e.g. YUC genes), as well as genes affecting stamen development, cell expansion and timing of flowering. Synergistically with other SHI-related proteins, regulates gynoecium, stamen and leaf development in a dose-dependent manner, controlling apical-basal patterning. Promotes style and stigma formation, and influences vascular development during gynoecium development. May also have a role in the formation and/or maintenance of the shoot apical meristem (SAM). The protein is Protein SHI RELATED SEQUENCE 6 (SRS6) of Arabidopsis thaliana (Mouse-ear cress).